The chain runs to 190 residues: Adenylate kinase (190 aa).

12 to 17 (GSGKTT) provides a ligand contact to ATP. An NMP region spans residues 34 to 63 (STGELLRAEVASGSERGKIIEGFTSKGNLV). Residues Thr35, Arg40, 61 to 63 (NLV), 88 to 91 (GYPR), and Gln95 each bind AMP. An LID region spans residues 130–136 (GRARGAD). An ATP-binding site is contributed by Arg131. Residues Arg133 and Arg145 each coordinate AMP. Residue Arg173 participates in ATP binding.

Belongs to the adenylate kinase family. In terms of assembly, monomer.

The protein localises to the cytoplasm. The catalysed reaction is AMP + ATP = 2 ADP. It participates in purine metabolism; AMP biosynthesis via salvage pathway; AMP from ADP: step 1/1. Catalyzes the reversible transfer of the terminal phosphate group between ATP and AMP. Plays an important role in cellular energy homeostasis and in adenine nucleotide metabolism. This chain is Adenylate kinase, found in Wolinella succinogenes (strain ATCC 29543 / DSM 1740 / CCUG 13145 / JCM 31913 / LMG 7466 / NCTC 11488 / FDC 602W) (Vibrio succinogenes).